The sequence spans 394 residues: Peroxisomal membrane protein PEX25 (394 aa).

Positions 1 to 25 (MSQFGTTDIVSGSETPPYSGASYQD) are enriched in polar residues. A disordered region spans residues 1 to 65 (MSQFGTTDIV…SRSDDEDSQA (65 aa)). Topologically, residues 1 to 366 (MSQFGTTDIV…LNLKTPKGTY (366 aa)) are cytoplasmic. Over residues 51 to 65 (SHTESSRSDDEDSQA) the composition is skewed to basic and acidic residues. 3 positions are modified to phosphoserine: Ser58, Ser63, and Ser289. Residues 367-383 (AVLSLGSGLTGLVKLWI) form a helical membrane-spanning segment. Over 384–394 (TTKRSLCSSKD) the chain is Lumenal.

As to quaternary structure, homooligomer. Interacts with PEX27 and PEX34.

Its subcellular location is the peroxisome membrane. Its function is as follows. Required for regulation of peroxisome size and maintenance. Has a role in the import of peroxisomal matrix proteins. Imports RHO1 into the peroxisome. Also promotes peroxisome division and biogenesis. This chain is Peroxisomal membrane protein PEX25 (PEX25), found in Saccharomyces cerevisiae (strain ATCC 204508 / S288c) (Baker's yeast).